Here is a 191-residue protein sequence, read N- to C-terminus: Ribonuclease HII (191 aa).

The RNase H type-2 domain occupies isoleucine 16–leucine 191. A divalent metal cation-binding residues include aspartate 22, glutamate 23, and aspartate 110.

Belongs to the RNase HII family. Mn(2+) is required as a cofactor. Mg(2+) serves as cofactor.

It is found in the cytoplasm. The enzyme catalyses Endonucleolytic cleavage to 5'-phosphomonoester.. Endonuclease that specifically degrades the RNA of RNA-DNA hybrids. In Campylobacter jejuni subsp. jejuni serotype O:2 (strain ATCC 700819 / NCTC 11168), this protein is Ribonuclease HII (rnhB).